We begin with the raw amino-acid sequence, 560 residues long: Probable 2,3-bisphosphoglycerate-independent phosphoglycerate mutase 2 (560 aa).

Gly2 carries the N-acetylglycine modification. Mn(2+) contacts are provided by Asp29 and Ser82. Residue Ser82 is the Phosphoserine intermediate of the active site. Substrate is bound by residues His141, 171–172 (RD), Arg207, Arg214, 287–290 (RADR), and Lys362. Residues Asp431, His435, Asp472, His473, and His502 each coordinate Mn(2+).

This sequence belongs to the BPG-independent phosphoglycerate mutase family. In terms of assembly, monomer. It depends on Mn(2+) as a cofactor.

The protein resides in the cytoplasm. It catalyses the reaction (2R)-2-phosphoglycerate = (2R)-3-phosphoglycerate. It functions in the pathway carbohydrate degradation; glycolysis; pyruvate from D-glyceraldehyde 3-phosphate: step 3/5. Catalyzes the interconversion of 2-phosphoglycerate (2-PGA) and 3-phosphoglycerate (3-PGA). Required for guard cell function (e.g. blue light-, abscisic acid- (ABA), and low CO(2)-regulated stomatal movements) and fertility (e.g. pollen grains production). The chain is Probable 2,3-bisphosphoglycerate-independent phosphoglycerate mutase 2 (PGM2) from Arabidopsis thaliana (Mouse-ear cress).